A 276-amino-acid chain; its full sequence is Diaminopimelate epimerase (276 aa).

Residues asparagine 13, glutamine 46, and asparagine 66 each coordinate substrate. Cysteine 75 acts as the Proton donor in catalysis. Residues 76–77 (GN), asparagine 159, asparagine 192, and 210–211 (ER) each bind substrate. Cysteine 219 serves as the catalytic Proton acceptor. 220-221 (GT) contacts substrate.

It belongs to the diaminopimelate epimerase family. In terms of assembly, homodimer.

Its subcellular location is the cytoplasm. The catalysed reaction is (2S,6S)-2,6-diaminopimelate = meso-2,6-diaminopimelate. The protein operates within amino-acid biosynthesis; L-lysine biosynthesis via DAP pathway; DL-2,6-diaminopimelate from LL-2,6-diaminopimelate: step 1/1. Catalyzes the stereoinversion of LL-2,6-diaminopimelate (L,L-DAP) to meso-diaminopimelate (meso-DAP), a precursor of L-lysine and an essential component of the bacterial peptidoglycan. In Pseudomonas fluorescens (strain Pf0-1), this protein is Diaminopimelate epimerase.